A 208-amino-acid chain; its full sequence is MIRVAMTKGRIQKQVTILLEQAGFDMTAVREMGRELVVTIPDDLEIIFGKANDVITFLEHGIVDIGFVGKDTLDENDFDDYYELLDLKVGQCIFALASYPDFLNKKFHRRKRIASKYPRITKNYFAQKQEDIEIIKLEGSVELGPVVGLADAIVDIVETGNTLSANGLVVIEKISQISTRMIVNKVSFKFKKDKIIEIVERLENAQTN.

The protein belongs to the ATP phosphoribosyltransferase family. Short subfamily. Heteromultimer composed of HisG and HisZ subunits.

It is found in the cytoplasm. The enzyme catalyses 1-(5-phospho-beta-D-ribosyl)-ATP + diphosphate = 5-phospho-alpha-D-ribose 1-diphosphate + ATP. It participates in amino-acid biosynthesis; L-histidine biosynthesis; L-histidine from 5-phospho-alpha-D-ribose 1-diphosphate: step 1/9. In terms of biological role, catalyzes the condensation of ATP and 5-phosphoribose 1-diphosphate to form N'-(5'-phosphoribosyl)-ATP (PR-ATP). Has a crucial role in the pathway because the rate of histidine biosynthesis seems to be controlled primarily by regulation of HisG enzymatic activity. The sequence is that of ATP phosphoribosyltransferase from Lactococcus lactis subsp. cremoris (strain MG1363).